The chain runs to 244 residues: 7-cyano-7-deazaguanine synthase (244 aa).

14-24 is an ATP binding site; sequence FSGGQDSATCV. The Zn(2+) site is built by cysteine 202, cysteine 217, cysteine 220, and cysteine 223.

Belongs to the QueC family. It depends on Zn(2+) as a cofactor.

It carries out the reaction 7-carboxy-7-deazaguanine + NH4(+) + ATP = 7-cyano-7-deazaguanine + ADP + phosphate + H2O + H(+). It functions in the pathway purine metabolism; 7-cyano-7-deazaguanine biosynthesis. In terms of biological role, catalyzes the ATP-dependent conversion of 7-carboxy-7-deazaguanine (CDG) to 7-cyano-7-deazaguanine (preQ(0)). The protein is 7-cyano-7-deazaguanine synthase of Burkholderia mallei (strain NCTC 10229).